The primary structure comprises 249 residues: Phosphate import ATP-binding protein PstB (249 aa).

Positions 3–244 (IEANDVHVYY…PKKKRTQNYI (242 aa)) constitute an ABC transporter domain. ATP is bound at residue 35–42 (GPSGCGKS).

It belongs to the ABC transporter superfamily. Phosphate importer (TC 3.A.1.7) family. As to quaternary structure, the complex is composed of two ATP-binding proteins (PstB), two transmembrane proteins (PstC and PstA) and a solute-binding protein (PstS).

It localises to the cell inner membrane. The catalysed reaction is phosphate(out) + ATP + H2O = ADP + 2 phosphate(in) + H(+). Its function is as follows. Part of the ABC transporter complex PstSACB involved in phosphate import. Responsible for energy coupling to the transport system. This is Phosphate import ATP-binding protein PstB from Cytophaga hutchinsonii (strain ATCC 33406 / DSM 1761 / CIP 103989 / NBRC 15051 / NCIMB 9469 / D465).